The sequence spans 151 residues: Group 10 secretory phospholipase A2 (151 aa).

The signal sequence occupies residues 1–17 (MLLLLLLLLLGPGPGFS). A propeptide spanning residues 18–28 (EATRRSHVYKR) is cleaved from the precursor. Disulfide bonds link Cys39–Cys97, Cys53–Cys143, Cys55–Cys71, Cys70–Cys125, Cys76–Cys150, Cys77–Cys118, Cys86–Cys111, and Cys104–Cys116. 3 residues coordinate Ca(2+): Tyr54, Gly56, and Gly58. Residue His74 is part of the active site. Asp75 contacts Ca(2+). Asp119 is a catalytic residue.

It belongs to the phospholipase A2 family. In terms of assembly, interacts with PLA2R1; this interaction mediates PLA2G10 clearance and inactivation. Requires Ca(2+) as cofactor. In terms of tissue distribution, expressed at high levels in testis and the gastrointestinal tract including stomach and colon. Expressed at lower levels in other tissues including small intestine, uterus, oviduct, lung, thymus, spleen and brain. Expressed in Paneth-like secretory epithelial cells of the colon. Expressed in gastric and ileac epithelial cells and in glandular epithelium of intestinal mucosa (at protein level). Expressed in late spermatogenic cells, spermatocytes and spermatids, but not spermatogonia in seminiferous tubules (at protein level). Expressed mainly in the apical side of endometrial epithelial cells and in the interstitium beneath the epithelium of uterus (at protein level). Expressed in resident spleen macrophages (at protein level). Expressed at outermost layer of hair follicles. Expressed in dorsal root ganglia in both NEFH-positive A-fibers and PRPH-positive C-fibers (at protein level).

The protein resides in the secreted. The protein localises to the lysosome. It is found in the cytoplasmic vesicle. It localises to the secretory vesicle. Its subcellular location is the acrosome. It carries out the reaction a 1,2-diacyl-sn-glycero-3-phosphocholine + H2O = a 1-acyl-sn-glycero-3-phosphocholine + a fatty acid + H(+). The enzyme catalyses 1-hexadecanoyl-2-(9Z-octadecenoyl)-sn-glycero-3-phosphocholine + H2O = 1-hexadecanoyl-sn-glycero-3-phosphocholine + (9Z)-octadecenoate + H(+). It catalyses the reaction 1-octadecanoyl-2-(5Z,8Z,11Z,14Z-eicosatetraenoyl)-sn-glycero-3-phosphocholine + H2O = 1-octadecanoyl-sn-glycero-3-phosphocholine + (5Z,8Z,11Z,14Z)-eicosatetraenoate + H(+). The catalysed reaction is 1,2-dihexadecanoyl-sn-glycero-3-phosphocholine + H2O = 1-hexadecanoyl-sn-glycero-3-phosphocholine + hexadecanoate + H(+). It carries out the reaction 1-hexadecanoyl-2-(9Z-octadecenoyl)-sn-glycero-3-phosphoglycerol + H2O = 1-hexadecanoyl-sn-glycero-3-phosphoglycerol + (9Z)-octadecenoate + H(+). The enzyme catalyses 1,2-dihexadecanoyl-sn-glycero-3-phospho-(1'-sn-glycerol) + H2O = 1-hexadecanoyl-sn-glycero-3-phospho-(1'-sn-glycerol) + hexadecanoate + H(+). It catalyses the reaction 1-hexadecanoyl-2-(9Z-octadecenoyl)-sn-glycero-3-phospho-L-serine + H2O = 1-hexadecanoyl-sn-glycero-3-phospho-L-serine + (9Z)-octadecenoate + H(+). The catalysed reaction is 1-hexadecanoyl-2-(9Z,12Z-octadecadienoyl)-sn-glycero-3-phosphoethanolamine + H2O = 1-hexadecanoyl-sn-glycero-3-phosphoethanolamine + (9Z,12Z)-octadecadienoate + H(+). It carries out the reaction 1-hexadecanoyl-2-(9Z-octadecenoyl)-sn-glycero-3-phosphate + H2O = 1-hexadecanoyl-sn-glycero-3-phosphate + (9Z)-octadecenoate + H(+). The enzyme catalyses 1-O-hexadecyl-2-acetyl-sn-glycero-3-phosphocholine + H2O = 1-O-hexadecyl-sn-glycero-3-phosphocholine + acetate + H(+). Its function is as follows. Secretory calcium-dependent phospholipase A2 that primarily targets extracellular phospholipids. Hydrolyzes the ester bond of the fatty acyl group attached at sn-2 position of phospholipids with preference for phosphatidylcholines and phosphatidylglycerols over phosphatidylethanolamines. Preferentially releases sn-2 omega-6 and omega-3 polyunsaturated fatty acyl (PUFA) chains over saturated fatty acyls. Contributes to phospholipid remodeling of very low-density lipoprotein (VLDL), low-density lipoprotein (LDL) and high-density lipoprotein (HDL) particles. Hydrolyzes LDL phospholipids releasing unsaturated fatty acids that regulate macrophage differentiation toward foam cells. Efficiently hydrolyzes and inactivates PAF, a potent lipid mediator present in oxidized LDL. May act in an autocrine and paracrine manner. Secreted by lung epithelium, targets membrane phospholipids of infiltrating eosinophils, releasing arachidonate and boosting eicosanoid and cysteinyl leukotriene synthesis involved in airway inflammatory response. Secreted by gut epithelium, hydrolyzes dietary and biliary phosphatidylcholines in the gastrointestinal lumen, thereby regulating adipogenesis and body weight. Plays a stem cell regulator role in colon epithelium. Within intracellular compartment, mediates Paneth-like cell differentiation and its stem cell supporting functions by inhibiting Wnt signaling pathway in intestinal stem cell (ISC). Secreted in the intestinal lumen upon inflammation, acts in an autocrine way and promotes prostaglandin E2 synthesis that stimulates the Wnt signaling pathway in ISCs and tissue regeneration. May participate in hair follicle morphogenesis by regulating phosphatidylethanolamines metabolism at the outermost epithelial layer and facilitating melanin synthesis. By generating lysophosphatidylcholines (LPCs) at sperm acrosome controls sperm cell capacitation, acrosome reaction and overall fertility. May promote neurite outgrowth in neuron fibers involved in nociception. Contributes to lipid remodeling of cellular membranes and generation of lipid mediators involved in pathogen clearance. Cleaves sn-2 fatty acyl chains of phosphatidylglycerols and phosphatidylethanolamines, which are major components of membrane phospholipids in bacteria. Displays bactericidal activity against Gram-positive bacteria by directly hydrolyzing phospholipids of the bacterial membrane. In pulmonary epithelium, may contribute to host defense response against adenoviral infection. Prevents adenovirus entry into host cells by hydrolyzing host cell plasma membrane, releasing C16:0 LPCs that inhibit virus-mediated membrane fusion and viral infection. Likely prevents adenoviral entry into the endosomes of host cells. May play a role in maturation and activation of innate immune cells including macrophages, group 2 innate lymphoid cells and mast cells. This is Group 10 secretory phospholipase A2 (Pla2g10) from Mus musculus (Mouse).